The primary structure comprises 647 residues: LIM domain kinase 1 (647 aa).

LIM zinc-binding domains are found at residues 25–75 and 84–137; these read CASC…CKKD and CHGC…CGQC. The 94-residue stretch at 165-258 folds into the PDZ domain; sequence LVSIPASAHG…LLQLTLEHDP (94 aa). Position 210 is a phosphoserine (serine 210). Residue threonine 229 is modified to Phosphothreonine. Positions 256 to 316 are disordered; it reads HDPHDSLGHG…SLVSPASQRK (61 aa). The span at 278–289 shows a compositional bias: polar residues; sequence HTPSGQAGSSAR. Phosphoserine is present on residues serine 298, serine 302, serine 307, and serine 310. The residue at position 323 (serine 323) is a Phosphoserine; by MAPKAPK2. Residue serine 337 is modified to Phosphoserine. The 266-residue stretch at 339 to 604 folds into the Protein kinase domain; the sequence is LIHGEVLGKG…PSFVKLEQWL (266 aa). Residues 345–353 and lysine 368 contribute to the ATP site; that span reads LGKGCFGQA. Aspartate 460 is an active-site residue. At threonine 508 the chain carries Phosphothreonine; by ROCK1 and PAK1.

It belongs to the protein kinase superfamily. TKL Ser/Thr protein kinase family. Interacts (via LIM domain) with the cytoplasmic domain of NRG1. Interacts with NISCH. Interacts with RLIM and RNF6. Self-associates to form homodimers. Interacts with HSP90AA1; this interaction promotes LIMK1 dimerization and subsequent transphosphorylation. Interacts with CDKN1C. Interacts with SSH1. Interacts with ROCK1. Interacts (via LIM zinc-binding domains) with FAM89B/LRAP25 (via LRR repeat). Forms a tripartite complex with CDC42BPA, CDC42BPB and FAM89B/LRAP25. In terms of processing, autophosphorylated. Phosphorylated on Thr-508 by ROCK1 and PAK1, resulting in activation. Phosphorylated by PAK4 which increases the ability of LIMK1 to phosphorylate cofilin. Phosphorylated at Ser-323 by MAPKAPK2 during activation of VEGFA-induced signaling, which results in activation of LIMK1 and promotion of actin reorganization, cell migration, and tubule formation of endothelial cells. Dephosphorylated and inactivated by SSH1. Phosphorylated by CDC42BP. Post-translationally, ubiquitinated. 'Lys-48'-linked polyubiquitination by RNF6 leads to proteasomal degradation through the 26S proteasome, modulating LIMK1 levels in the growth cone and its effect on axonal outgrowth. Also polyubiquitinated by RLIM.

It localises to the cytoplasm. It is found in the nucleus. The protein resides in the cytoskeleton. The protein localises to the cell projection. Its subcellular location is the lamellipodium. The enzyme catalyses L-seryl-[protein] + ATP = O-phospho-L-seryl-[protein] + ADP + H(+). The catalysed reaction is L-threonyl-[protein] + ATP = O-phospho-L-threonyl-[protein] + ADP + H(+). Serine/threonine-protein kinase that plays an essential role in the regulation of actin filament dynamics. Acts downstream of several Rho family GTPase signal transduction pathways. Activated by upstream kinases including ROCK1, PAK1 and PAK4, which phosphorylate LIMK1 on a threonine residue located in its activation loop. LIMK1 subsequently phosphorylates and inactivates the actin binding/depolymerizing factors cofilin-1/CFL1, cofilin-2/CFL2 and destrin/DSTN, thereby preventing the cleavage of filamentous actin (F-actin), and stabilizing the actin cytoskeleton. In this way LIMK1 regulates several actin-dependent biological processes including cell motility, cell cycle progression, and differentiation. Phosphorylates TPPP on serine residues, thereby promoting microtubule disassembly. Stimulates axonal outgrowth and may be involved in brain development. The protein is LIM domain kinase 1 (Limk1) of Rattus norvegicus (Rat).